We begin with the raw amino-acid sequence, 763 residues long: Phosphoglycerol transferase I (763 aa).

The next 4 helical transmembrane spans lie at 1–21, 26–46, 77–97, and 108–128; these read MSELLSVALFLASVLIYAWKA, WWFAATLTVLGLFVILNITLY, ILPGIGIALALVAVFGALGWV, and VGYSLLALLLALGSVDASPAF.

Belongs to the OpgB family.

Its subcellular location is the cell inner membrane. It carries out the reaction a phosphatidylglycerol + a membrane-derived-oligosaccharide D-glucose = a 1,2-diacyl-sn-glycerol + a membrane-derived-oligosaccharide 6-(glycerophospho)-D-glucose.. It participates in glycan metabolism; osmoregulated periplasmic glucan (OPG) biosynthesis. Transfers a phosphoglycerol residue from phosphatidylglycerol to the membrane-bound nascent glucan backbones. The chain is Phosphoglycerol transferase I from Salmonella choleraesuis (strain SC-B67).